The primary structure comprises 590 residues: MHRYRTHTCGALRDSNIGETVRLSGWCHRIRDHGGVLFVDLRDHYGITQCVVDPDSKAFGLAEKLRSEWVVRMEGKVRHRPEGTENPELPTGQVELYVADIEVLGPAAELPLPVFGEQDYPEDIRLKYRFLDLRRDRLHQNIMTRGAIIDSMRRRMKEQGFFEFQTPILTASSPEGARDFLVPSRIHPGKFYALPQAPQQYKQLLMMSGFDRYFQIAPCFRDEDPRADRLPGEFYQLDVEMSFVEQEDVFAAMEPVITGVFEDFAKGKPVTKGWPRIPFAEALRKYGTDKPDLRNPLEMQDVSEHFRGSGFKVFARMLEDPKNQVWAIPAPGGGSRAFCDRMNSWAQGEGQPGLGYIMWREGGEGAGPLANNIGPERTAAIRSQLGTKEGDAAFFVAGDPDKFWKFAGLARTKVGEELNLIDKDRFALAWIVDFPMYEYNEDDKKVDFSHNPFSMPQGGLEALTTKDPLTIKAFQYDIACNGYEIASGGIRNHKPEAMVKAFEIAGYGEQEVVDRFGGMYRAFQYGAPPHGGMAAGVDRIVMLLCGTTNLREISLFPMNQQAMDLLMGAPSEATTKQLRELHIKPNLPNK.

Glutamate 175 contacts L-aspartate. The interval 199 to 202 (QQYK) is aspartate. L-aspartate is bound by residues arginine 221 and histidine 450. An ATP-binding site is contributed by 221 to 223 (RDE). Glutamate 484 contacts ATP. Residue arginine 491 coordinates L-aspartate. Residue 536-539 (GVDR) participates in ATP binding.

Belongs to the class-II aminoacyl-tRNA synthetase family. Type 1 subfamily. Homodimer.

Its subcellular location is the cytoplasm. The enzyme catalyses tRNA(Asx) + L-aspartate + ATP = L-aspartyl-tRNA(Asx) + AMP + diphosphate. Functionally, aspartyl-tRNA synthetase with relaxed tRNA specificity since it is able to aspartylate not only its cognate tRNA(Asp) but also tRNA(Asn). Reaction proceeds in two steps: L-aspartate is first activated by ATP to form Asp-AMP and then transferred to the acceptor end of tRNA(Asp/Asn). This is Aspartate--tRNA(Asp/Asn) ligase from Bradyrhizobium sp. (strain ORS 278).